The following is a 65-amino-acid chain: Cell death protein rpr (65 aa).

Interacts with Diap2 (via BIR2 domain).

Its function is as follows. Activator of apoptosis, as well as grim and hid, that acts on the effector Dredd. This chain is Cell death protein rpr (rpr), found in Drosophila melanogaster (Fruit fly).